The following is a 477-amino-acid chain: Glutamate--tRNA ligase 2 (477 aa).

The 'HIGH' region motif lies at 9 to 19; sequence PSPTGFLHIGG. The 'KMSKS' region signature appears at 238–242; the sequence is KLSKR. Position 241 (Lys241) interacts with ATP.

Belongs to the class-I aminoacyl-tRNA synthetase family. Glutamate--tRNA ligase type 1 subfamily. Monomer.

The protein localises to the cytoplasm. The enzyme catalyses tRNA(Glu) + L-glutamate + ATP = L-glutamyl-tRNA(Glu) + AMP + diphosphate. Functionally, catalyzes the attachment of glutamate to tRNA(Glu) in a two-step reaction: glutamate is first activated by ATP to form Glu-AMP and then transferred to the acceptor end of tRNA(Glu). This chain is Glutamate--tRNA ligase 2, found in Paramagnetospirillum magneticum (strain ATCC 700264 / AMB-1) (Magnetospirillum magneticum).